Consider the following 293-residue polypeptide: RNA pseudouridylate synthase domain-containing protein 1 (293 aa).

The active site involves aspartate 67.

It belongs to the pseudouridine synthase RluA family.

This chain is RNA pseudouridylate synthase domain-containing protein 1 (rpusd1), found in Danio rerio (Zebrafish).